The primary structure comprises 338 residues: D-erythrose-4-phosphate dehydrogenase (338 aa).

Residue 11–12 coordinates NAD(+); it reads RI. Substrate contacts are provided by residues 153–155, Arg199, 212–213, and Arg235; these read SCT and TK. Cys154 functions as the Nucleophile in the catalytic mechanism. Position 317 (Asn317) interacts with NAD(+).

Belongs to the glyceraldehyde-3-phosphate dehydrogenase family. Epd subfamily. Homotetramer.

The protein resides in the cytoplasm. It carries out the reaction D-erythrose 4-phosphate + NAD(+) + H2O = 4-phospho-D-erythronate + NADH + 2 H(+). It functions in the pathway cofactor biosynthesis; pyridoxine 5'-phosphate biosynthesis; pyridoxine 5'-phosphate from D-erythrose 4-phosphate: step 1/5. Its function is as follows. Catalyzes the NAD-dependent conversion of D-erythrose 4-phosphate to 4-phosphoerythronate. In Shewanella sp. (strain MR-4), this protein is D-erythrose-4-phosphate dehydrogenase.